Here is a 258-residue protein sequence, read N- to C-terminus: 5-oxoprolinase subunit A 2 (258 aa).

This sequence belongs to the LamB/PxpA family. In terms of assembly, forms a complex composed of PxpA, PxpB and PxpC.

The enzyme catalyses 5-oxo-L-proline + ATP + 2 H2O = L-glutamate + ADP + phosphate + H(+). Catalyzes the cleavage of 5-oxoproline to form L-glutamate coupled to the hydrolysis of ATP to ADP and inorganic phosphate. The protein is 5-oxoprolinase subunit A 2 of Pseudomonas putida (strain ATCC 47054 / DSM 6125 / CFBP 8728 / NCIMB 11950 / KT2440).